The sequence spans 122 residues: uncharacterized protein (122 aa).

A helical membrane pass occupies residues 93-113; that stretch reads ILRICIVFLSLKIYTLTLVII.

Its subcellular location is the membrane. This is an uncharacterized protein from Saccharomyces cerevisiae (strain ATCC 204508 / S288c) (Baker's yeast).